A 487-amino-acid chain; its full sequence is Serralysin (487 aa).

A propeptide spanning residues 1–16 (MQSTKKAIEITESSLA) is cleaved from the precursor. His192 provides a ligand contact to Zn(2+). Glu193 is an active-site residue. Positions 196, 202, and 232 each coordinate Zn(2+). Arg269, Gly271, Thr273, Asp301, Gly303, Gly304, Asp306, Thr343, Glu345, Gly350, Gly352, Asp354, Asn359, Ala361, Asn363, Gly367, Gly368, Ala369, Gly370, Asp372, Gly376, Gly377, Gly378, Gly379, Asp381, Gly385, Gly386, Ala387, Gly388, Asp390, Asp399, Asp406, and Asp416 together coordinate Ca(2+). 2 Hemolysin-type calcium-binding repeats span residues 348 to 365 (IGGS…NNVL) and 366 to 383 (KGGA…ADEL).

This sequence belongs to the peptidase M10B family. It depends on Ca(2+) as a cofactor. Requires Zn(2+) as cofactor.

It is found in the secreted. The catalysed reaction is Preferential cleavage of bonds with hydrophobic residues in P1'.. Its function is as follows. Has insecticidal activity against the locust M.palpalis. When administered orally to locusts at a low dose it causes them to lie on their sides exhibiting sporadic limb movements and muscular twitching, followed by full recovery. When administered at higher doses the same symptoms are observed, followed by death. This is Serralysin from Serratia marcescens.